The chain runs to 215 residues: Tricarboxylate transporter ALT9 (215 aa).

2 Solcar repeats span residues 18 to 106 (TTVV…LAPM) and 111 to 197 (CGVS…VVRL). 3 helical membrane passes run 19–39 (TVVG…VLVL), 112–132 (GVST…YCTM), and 182–202 (VAGA…GFLV).

It belongs to the mitochondrial carrier (TC 2.A.29) family.

Its subcellular location is the mitochondrion inner membrane. Its pathway is mycotoxin biosynthesis. Tricarboxylate transporter; part of the gene cluster that mediates the biosynthesis of the host-selective toxins (HSTs) AAL-toxins, sphinganine-analog mycotoxins responsible for Alternaria stem canker on tomato by the tomato pathotype. The biosynthesis starts with the polyketide synthase ALT1-catalyzed C-16 carbon chain assembly from one starter acetyl-CoA unit with malonyl-CoA extender units. ALT1 also selectively transfers methyl groups at the first and the third cycle of chain elongation for AAL toxin. The C-16 polyketide chain is released from the enzyme by a nucleophilic attack of a carbanion, which is derived from R-carbon of glycin by decarboxylation, on the carbonyl carbon of polyketide acyl chain. This step is probably catalyzed by a pyridoxal 5'-phosphate-dependent aminoacyl transferase ALT4. The respective functions of the other enzymes encoded by the cluster have still to be elucidated. The sphingosine N-acyltransferase-like protein ALT7 seems not to act as a resistance/self-tolerance factor against the toxin in the toxin biosynthetic gene cluster, contrary to what is expected. The sequence is that of Tricarboxylate transporter ALT9 from Alternaria alternata (Alternaria rot fungus).